A 326-amino-acid polypeptide reads, in one-letter code: Septum site-determining protein minD homolog, chloroplastic (326 aa).

Residues 1 to 62 (MASLRLFSTN…LAGETPRIVV (62 aa)) constitute a chloroplast transit peptide. 67 to 74 (KGGVGKTT) contacts ATP.

The protein belongs to the ParA family. MinD subfamily. In terms of assembly, homodimer. Interacts with MINE1. Binds to ARC3. Interacts with MCD1. Interacts with CDP1/PARC6.

Its subcellular location is the plastid. The protein localises to the chloroplast inner membrane. Stimulated ATPase activity by MINE1. In terms of biological role, together with ARC3 and MCD1, regulates FtsZ ring positioning in chloroplasts in an ARC6-dependent manner. Calcium-dependent ATPase required for the correct placement of the plastid division site. Inhibits FtsZ filament and ring formation in the plastid. Mediates inhibition of plastid division. In cooperation with MINE1, prevents FtsZ ring formation anywhere outside of the mid-plastids. The sequence is that of Septum site-determining protein minD homolog, chloroplastic from Arabidopsis thaliana (Mouse-ear cress).